The chain runs to 765 residues: Phosphoribosylformylglycinamidine synthase subunit PurL (765 aa).

Histidine 41 is an active-site residue. The ATP site is built by tyrosine 44 and lysine 83. Mg(2+) is bound at residue glutamate 85. Substrate is bound by residues 86–89 (SHNH) and arginine 108. Histidine 87 serves as the catalytic Proton acceptor. Aspartate 109 contributes to the Mg(2+) binding site. Residue glutamine 232 participates in substrate binding. Aspartate 260 is a binding site for Mg(2+). 304–306 (ESQ) is a binding site for substrate. Residues aspartate 503 and glycine 540 each coordinate ATP. Residue asparagine 541 coordinates Mg(2+). Serine 543 contributes to the substrate binding site.

The protein belongs to the FGAMS family. As to quaternary structure, monomer. Part of the FGAM synthase complex composed of 1 PurL, 1 PurQ and 2 PurS subunits.

The protein resides in the cytoplasm. The catalysed reaction is N(2)-formyl-N(1)-(5-phospho-beta-D-ribosyl)glycinamide + L-glutamine + ATP + H2O = 2-formamido-N(1)-(5-O-phospho-beta-D-ribosyl)acetamidine + L-glutamate + ADP + phosphate + H(+). Its pathway is purine metabolism; IMP biosynthesis via de novo pathway; 5-amino-1-(5-phospho-D-ribosyl)imidazole from N(2)-formyl-N(1)-(5-phospho-D-ribosyl)glycinamide: step 1/2. Functionally, part of the phosphoribosylformylglycinamidine synthase complex involved in the purines biosynthetic pathway. Catalyzes the ATP-dependent conversion of formylglycinamide ribonucleotide (FGAR) and glutamine to yield formylglycinamidine ribonucleotide (FGAM) and glutamate. The FGAM synthase complex is composed of three subunits. PurQ produces an ammonia molecule by converting glutamine to glutamate. PurL transfers the ammonia molecule to FGAR to form FGAM in an ATP-dependent manner. PurS interacts with PurQ and PurL and is thought to assist in the transfer of the ammonia molecule from PurQ to PurL. The chain is Phosphoribosylformylglycinamidine synthase subunit PurL from Synechococcus sp. (strain WH7803).